Reading from the N-terminus, the 752-residue chain is MSEVKYFEDTDYGVIEAIATIDNGDFGTRTIRFETGQLARQADGAVTTYLDDETMLLATTTASNQPREGLDFFPLTVDVEERMYAAGRIPGSFFRREGRPSTEAILACRLIDRPLRPTFVKGLRNEVQVIITVMSVSPEDSYDVVAINGASAATRISGLPVSGAVGGVRMALIADENHPEGQWVAFPTAEQQKASVFELVVAGRLVERKRGNKTFSDVAVMMVEAGASENVVERIKEGAPAPTEKTVAEGLEAAKPFIDLLCRAQEGLAQRVAKETREFPLFPAYSDEVYAAVEKQASKKLTQLMTIKGKNERENATNDFMVEVEEKLIGRFEDDLGAAVASKEIRAAYNSLMKKIVRGKILSEGFRIDGRGVSDIRDLGVEVELIPRAHGSSLFERGETQILGVTTLDMLKMEQHIDSLAPVDTKRYMHHYNFPPYSTGETGRVGSPKRREIGHGALAERAVLPVIPSREDFPYAIRQVSEALGSNGSTSMGSVCASTLSLYNAGVPLKAPVAGIAMGLVSDEVDGKTEYVALTDILGAEDAFGDMDFKVAGTAEFITALQLDTKLDGIPSKVLADALEQARDARLAILETMAEVIDGPDEMSQFAPRITTIQIPVSKIGELIGPKGKNINALTEETGANISIEDDGTVFISAASGEAAEAAIEKINALANPQLPKVGERFLGTVVKATAFGAFVSLLPGRDGLVHISKLGNGKRVEKVEDVVTVGEKLQVEIADIDNRGKISLVPVVEED.

Mg(2+) is bound by residues aspartate 542 and aspartate 548. Residues 608 to 667 (PRITTIQIPVSKIGELIGPKGKNINALTEETGANISIEDDGTVFISAASGEAAEAAIEKI) enclose the KH domain. The S1 motif domain occupies 679 to 748 (GERFLGTVVK…NRGKISLVPV (70 aa)).

Belongs to the polyribonucleotide nucleotidyltransferase family. Mg(2+) is required as a cofactor.

The protein resides in the cytoplasm. The catalysed reaction is RNA(n+1) + phosphate = RNA(n) + a ribonucleoside 5'-diphosphate. Its function is as follows. Involved in mRNA degradation. Catalyzes the phosphorolysis of single-stranded polyribonucleotides processively in the 3'- to 5'-direction. The sequence is that of Polyribonucleotide nucleotidyltransferase from Corynebacterium efficiens (strain DSM 44549 / YS-314 / AJ 12310 / JCM 11189 / NBRC 100395).